Consider the following 76-residue polypeptide: Demidefensin-3 (76 aa).

Positions 1 to 22 (MRTLALHTAMLLLVALHAQAEA) are cleaved as a signal peptide. Residues 23-64 (RQARADEAAAQQQPGADDQGMAHSFTWPENAALPLSESERGL) constitute a propeptide that is removed on maturation. The tract at residues 25–45 (ARADEAAAQQQPGADDQGMAH) is disordered. A compositionally biased stretch (low complexity) spans 30–44 (AAAQQQPGADDQGMA). Cys68 and Cys73 are oxidised to a cystine. Residues 74-76 (RLL) constitute a propeptide that is removed on maturation.

It belongs to the alpha-defensin family. Theta subfamily. As to quaternary structure, forms a cyclic homodimer; disulfide-linked. In terms of processing, this is a cyclic peptide.

Has antimicrobial activities against bacteria and fungi. The protein is Demidefensin-3 of Macaca mulatta (Rhesus macaque).